The primary structure comprises 611 residues: Phosphomethylpyrimidine synthase (611 aa).

Substrate contacts are provided by residues N212, M241, Y270, H306, 326–328 (SRG), 367–370 (DGLR), and E406. Residue H410 coordinates Zn(2+). Y433 contributes to the substrate binding site. H474 contributes to the Zn(2+) binding site. Residues C554, C557, and C562 each coordinate [4Fe-4S] cluster.

The protein belongs to the ThiC family. In terms of assembly, homodimer. Requires [4Fe-4S] cluster as cofactor.

The enzyme catalyses 5-amino-1-(5-phospho-beta-D-ribosyl)imidazole + S-adenosyl-L-methionine = 4-amino-2-methyl-5-(phosphooxymethyl)pyrimidine + CO + 5'-deoxyadenosine + formate + L-methionine + 3 H(+). It functions in the pathway cofactor biosynthesis; thiamine diphosphate biosynthesis. In terms of biological role, catalyzes the synthesis of the hydroxymethylpyrimidine phosphate (HMP-P) moiety of thiamine from aminoimidazole ribotide (AIR) in a radical S-adenosyl-L-methionine (SAM)-dependent reaction. This Bartonella bacilliformis (strain ATCC 35685 / KC583 / Herrer 020/F12,63) protein is Phosphomethylpyrimidine synthase.